Consider the following 538-residue polypeptide: Methionine--tRNA ligase (538 aa).

The short motif at 21 to 31 (YYVNDAPHLGH) is the 'HIGH' region element. Zn(2+)-binding residues include C137, C140, C162, and H165. The 'KMSKS' region signature appears at 313–317 (KMSKS). K316 is a binding site for ATP.

It belongs to the class-I aminoacyl-tRNA synthetase family. MetG type 2A subfamily. Monomer. Requires Zn(2+) as cofactor.

Its subcellular location is the cytoplasm. It catalyses the reaction tRNA(Met) + L-methionine + ATP = L-methionyl-tRNA(Met) + AMP + diphosphate. Is required not only for elongation of protein synthesis but also for the initiation of all mRNA translation through initiator tRNA(fMet) aminoacylation. The polypeptide is Methionine--tRNA ligase (Streptomyces coelicolor (strain ATCC BAA-471 / A3(2) / M145)).